The chain runs to 354 residues: DNA integrity scanning protein DisA (354 aa).

A DAC domain is found at 6 to 144 (GMKIKDTLKI…GDIKYVLRDS (139 aa)). ATP is bound by residues Gly-73, Leu-91, and 104–108 (TRHRT).

It belongs to the DisA family. As to quaternary structure, homooctamer. The cofactor is Mg(2+).

It carries out the reaction 2 ATP = 3',3'-c-di-AMP + 2 diphosphate. Its function is as follows. Participates in a DNA-damage check-point that is active prior to asymmetric division when DNA is damaged. DisA forms globular foci that rapidly scan along the chromosomes during sporulation, searching for lesions. When a lesion is present, DisA pauses at the lesion site. This triggers a cellular response that culminates in a temporary block in sporulation initiation. Also has diadenylate cyclase activity, catalyzing the condensation of 2 ATP molecules into cyclic di-AMP (c-di-AMP). c-di-AMP acts as a signaling molecule that couples DNA integrity with progression of sporulation. The rise in c-di-AMP level generated by DisA while scanning the chromosome, operates as a positive signal that advances sporulation; upon encountering a lesion, the DisA focus arrests at the damaged site and halts c-di-AMP synthesis. In Clostridium botulinum (strain Eklund 17B / Type B), this protein is DNA integrity scanning protein DisA.